A 106-amino-acid polypeptide reads, in one-letter code: ATP-dependent Clp protease adapter protein ClpS (106 aa).

The disordered stretch occupies residues 1–20; it reads MKVDMSTSVKDDAQLEASRV.

It belongs to the ClpS family. Binds to the N-terminal domain of the chaperone ClpA.

Its function is as follows. Involved in the modulation of the specificity of the ClpAP-mediated ATP-dependent protein degradation. The chain is ATP-dependent Clp protease adapter protein ClpS from Chromobacterium violaceum (strain ATCC 12472 / DSM 30191 / JCM 1249 / CCUG 213 / NBRC 12614 / NCIMB 9131 / NCTC 9757 / MK).